The chain runs to 304 residues: Sulfate adenylyltransferase subunit 2 (304 aa).

The protein belongs to the PAPS reductase family. CysD subfamily. Heterodimer composed of CysD, the smaller subunit, and CysN.

It catalyses the reaction sulfate + ATP + H(+) = adenosine 5'-phosphosulfate + diphosphate. It functions in the pathway sulfur metabolism; hydrogen sulfide biosynthesis; sulfite from sulfate: step 1/3. In terms of biological role, with CysN forms the ATP sulfurylase (ATPS) that catalyzes the adenylation of sulfate producing adenosine 5'-phosphosulfate (APS) and diphosphate, the first enzymatic step in sulfur assimilation pathway. APS synthesis involves the formation of a high-energy phosphoric-sulfuric acid anhydride bond driven by GTP hydrolysis by CysN coupled to ATP hydrolysis by CysD. The chain is Sulfate adenylyltransferase subunit 2 from Halorhodospira halophila (strain DSM 244 / SL1) (Ectothiorhodospira halophila (strain DSM 244 / SL1)).